Here is a 288-residue protein sequence, read N- to C-terminus: Coiled-coil domain-containing protein 190 (288 aa).

Positions 16–69 form a coiled coil; sequence LERKSARQAEARLSLRLQRLEIICLYHVKSLAREQRQLQKELQRLQQDIIKKRF. The interval 141-235 is disordered; sequence GERTSCFKEG…SSVDYAGSFK (95 aa). A compositionally biased stretch (basic and acidic residues) spans 177 to 188; the sequence is HDQELSTNKTED. Polar residues predominate over residues 203–213; sequence ANETRSENASQ.

This is Coiled-coil domain-containing protein 190 (Ccdc190) from Mus musculus (Mouse).